A 280-amino-acid polypeptide reads, in one-letter code: Lacto-N-neotetraose biosynthesis glycosyltransferase LgtE (280 aa).

This sequence belongs to the glycosyltransferase 25 family.

It functions in the pathway glycan metabolism; lacto-N-neotetraose biosynthesis. The protein operates within bacterial outer membrane biogenesis; lipooligosaccharide biosynthesis. Its function is as follows. Adds the first galactose to the lacto-N-tetraose chain in lipooligosaccharide (LOS). The polypeptide is Lacto-N-neotetraose biosynthesis glycosyltransferase LgtE (lgtE) (Neisseria meningitidis serogroup B (strain ATCC BAA-335 / MC58)).